We begin with the raw amino-acid sequence, 1909 residues long: Receptor-type tyrosine-protein phosphatase F (1909 aa).

Residues methionine 1–alanine 31 form the signal peptide. Over aspartate 32–tryptophan 1266 the chain is Extracellular. 3 Ig-like C2-type domains span residues proline 35–threonine 125, proline 137–tyrosine 225, and proline 233–serine 315. Cysteine 56 and cysteine 109 are joined by a disulfide. Residue tryptophan 68–serine 77 coordinates heparin. Asparagine 119 is a glycosylation site (N-linked (GlcNAc...) asparagine). Cysteine 158 and cysteine 208 form a disulfide bridge. N-linked (GlcNAc...) asparagine glycosylation is found at asparagine 251 and asparagine 296. A disulfide bond links cysteine 254 and cysteine 299. 8 consecutive Fibronectin type-III domains span residues proline 322 to glutamine 412, proline 417 to glycine 511, glutamine 515 to serine 604, proline 609 to aspartate 706, proline 711 to alanine 819, valine 820 to valine 914, phenylalanine 918 to alanine 1013, and phenylalanine 1014 to aspartate 1098. Residues glycine 399 to proline 418 form a disordered region. Residue asparagine 721 is glycosylated (N-linked (GlcNAc...) asparagine). Residues asparagine 963 and asparagine 966 are each glycosylated (N-linked (GlcNAc...) asparagine). The chain crosses the membrane as a helical span at residues valine 1267 to phenylalanine 1287. The Cytoplasmic segment spans residues lysine 1288–threonine 1909. 2 consecutive Tyrosine-protein phosphatase domains span residues phenylalanine 1354–alanine 1609 and methionine 1641–tyrosine 1900. Substrate is bound by residues aspartate 1518, cysteine 1550–arginine 1556, and glutamine 1594. The Phosphocysteine intermediate role is filled by cysteine 1550. The Phosphocysteine intermediate role is filled by cysteine 1841.

Belongs to the protein-tyrosine phosphatase family. Receptor class 2A subfamily.

It localises to the membrane. It carries out the reaction O-phospho-L-tyrosyl-[protein] + H2O = L-tyrosyl-[protein] + phosphate. Possible cell adhesion receptor. It possesses an intrinsic protein tyrosine phosphatase activity (PTPase). Its function is as follows. The first PTPase domain has enzymatic activity, while the second one seems to affect the substrate specificity of the first one. The protein is Receptor-type tyrosine-protein phosphatase F (ptprf) of Danio rerio (Zebrafish).